We begin with the raw amino-acid sequence, 1231 residues long: RNA-binding protein 33 (1231 aa).

The span at M1–A13 shows a compositional bias: gly residues. 2 disordered regions span residues M1–Q168 and S219–E261. The residue at position 2 (A2) is an N-acetylalanine. Basic and acidic residues predominate over residues Q20–D36. The segment covering E37 to G49 has biased composition (acidic residues). At S41 the chain carries Phosphoserine. Over residues F82–N108 the composition is skewed to polar residues. Acidic residues-rich tracts occupy residues G112–E124 and L153–Q168. Positions E224–K240 are enriched in basic and acidic residues. The span at E241 to E252 shows a compositional bias: acidic residues. Residues S243 and S271 each carry the phosphoserine modification. Disordered stretches follow at residues F297–H436 and P452–E761. Positions K305 to R316 are enriched in basic residues. Residues G327–P344 show a composition bias toward basic and acidic residues. Over residues L360–Q379 the composition is skewed to pro residues. Residues Q380 to Q398 are compositionally biased toward low complexity. The span at F469 to V483 shows a compositional bias: pro residues. Residue R520 is modified to Asymmetric dimethylarginine. 4 stretches are compositionally biased toward pro residues: residues S531–T540, F604–P618, L632–Q647, and P661–H682. 2 stretches are compositionally biased toward polar residues: residues Q713–P728 and A736–L759. Residues S792 and S816 each carry the phosphoserine modification. Disordered stretches follow at residues R796 to L840, E876 to A932, and E998 to Q1080. Basic and acidic residues predominate over residues Q820–A829. Residues L840–Q891 are a coiled coil. Low complexity predominate over residues Q880–Q901. 2 positions are modified to phosphoserine: S1002 and S1010. Residue K1019 forms a Glycyl lysine isopeptide (Lys-Gly) (interchain with G-Cter in SUMO2) linkage. S1032 and S1051 each carry phosphoserine.

Associates with the NXF1-NXT1 RNA export complex. Interacts with ALKBH5; facilitating ALKBH5 recruitment to m6A-containing transcripts. Interacts with SENP1; promoting ALKBH5 deSUMOylation and subsequent activation.

The protein resides in the nucleus. The protein localises to the cytoplasm. Functionally, RNA reader protein, which recognizes and binds specific RNAs, thereby regulating RNA metabolic processes, such as mRNA export, mRNA stability and/or translation. Binds a subset of intronless RNAs containing GC-rich elements, such as NORAD, and promotes their nuclear export by recruiting target RNAs to components of the NXF1-NXT1 RNA export machinery. Specifically recognizes and binds N6-methyladenosine (m6A)-containing mRNAs, promoting their demethylation by ALKBH5. Acts as an molecular adapter, which (1) promotes ALKBH5 recruitment to m6A-containing transcripts and (2) activates ALKBH5 demethylase activity by recruiting SENP1, leading to ALKBH5 deSUMOylation and subsequent activation. The protein is RNA-binding protein 33 of Mus musculus (Mouse).